A 594-amino-acid polypeptide reads, in one-letter code: MSRLEARTRYLQAGQKRLGKIRKRGFFMETAATKNYLALSFGCLSPTRGEEYLLDQIKKKHDLWNKLVEKDREHREKVRQVMVFESETTKKIKELEEELNSLREEIKNQRKTKRTGKVDLTDQKARIEEIKPQLKQLKEKFKEERSFIFEARKQELAQLEKERWAVVKELGKGSGLYWCNLEDVVNSYDIGRKKAKAAGGEMRFHRWDGTGKVTVRFQKGLPVNEMFSCTNNLLQIDPVDKDAWYNPVRAIRRKKSRTRVRLRACSENKKPLFIELPVVLHREIPEDALIRTASVIREKVGMRYRYKLNLVLEILGENTNRILPALEGTAAIDLGWRTVKDGLRVACLVDDKGHSEELILDNDVLHEFNKIKDLQSIRDNLFNETKAKLMELLKTLELPDEAKERTSHMANWRSQQKMLRLHQYWRENRLPGDDEVWEVLEYWRKREIHLYEWQENLRDQVLRRRKEIYRIFAAKITRKYKTIVLEEFTLNKTVQKPNPEEGPAGTLPANRNRFIAAISEFRNELANACRKNHVEFTYVPAENTTITCHKCGHKEKFDAAAQIIHTCSTCGELWDQDYNAAKNLLAFSQKGGVK.

The segment at Met-1–Glu-85 is recognition domain (REC1-N). Residues Ser-86–Lys-153 form a recognition domain (REC2) region. The segment at Gln-154–Gly-211 is recognition domain (REC1-C). The wedge domain (WED) stretch occupies residues Lys-212–Ile-314. The interval Leu-315–Thr-329 is linker. A ruvC-I region spans residues Ala-330 to Pro-540. Residues Ala-541–Asp-575 are target nucleic-acid binding (TNB). Cys-548, Cys-551, Cys-567, and Cys-570 together coordinate Zn(2+). The interval Gln-576–Lys-594 is ruvC-II. Residue Asp-577 participates in Mg(2+) binding.

Belongs to the CRISPR-associated DNA-binding protein Cas12m family. Requires Mg(2+) as cofactor. The cofactor is Zn(2+).

Its function is as follows. CRISPR (clustered regularly interspaced short palindromic repeat), is an adaptive immune system that provides protection against mobile genetic elements (viruses, transposable elements and conjugative plasmids). CRISPR clusters contain sequences complementary to antecedent mobile elements and target invading nucleic acids. CRISPR clusters are transcribed and processed into CRISPR RNA (crRNA). Recognizes a short motif in the CRISPR repeat sequences (the 5' PAM or protospacer adjacent motif, 5'-C/TCN-3' in this organism) to help distinguish self versus nonself, as targets within the bacterial CRISPR locus do not have PAMs. Upon expression in E.coli as a CRISPR locus inhibits plasmid propagation when targeted to regions essential for plasmid propagation (replication origin but not a selectable marker), probably by inhibiting transcription. Cas12m-crRNA binds DNA in a PAM-dependent, crRNA-guided fashion. Upon expression in E.coli as a CRISPR region preferentially binds to its associated crRNA. Probably required for pre-crRNA processing to mature crRNA. The chain is CRISPR-associated DNA-binding protein Cas12m from Thermanaerosceptrum fracticalcis.